The primary structure comprises 627 residues: F-box only protein 21 (627 aa).

Residues 27 to 76 (PSCLVQLPGEVLEYILCSGSLTALDIGRVSSTCRRLREVCQSSGQVWKEQ) form the F-box domain.

In terms of assembly, directly interacts with SKP1 and CUL1.

In terms of biological role, substrate-recognition component of the SCF (SKP1-CUL1-F-box protein)-type E3 ubiquitin ligase complex. The sequence is that of F-box only protein 21 (Fbxo21) from Mus musculus (Mouse).